A 20-amino-acid polypeptide reads, in one-letter code: Cytochrome P450 3A5 (20 aa).

Belongs to the cytochrome P450 family. It depends on heme as a cofactor.

The protein localises to the endoplasmic reticulum membrane. The protein resides in the microsome membrane. The catalysed reaction is an organic molecule + reduced [NADPH--hemoprotein reductase] + O2 = an alcohol + oxidized [NADPH--hemoprotein reductase] + H2O + H(+). Functionally, 6-beta-testosterone hydroxylase. This Papio sp. (Baboon) protein is Cytochrome P450 3A5.